The chain runs to 142 residues: Large ribosomal subunit protein uL11 (142 aa).

It belongs to the universal ribosomal protein uL11 family. As to quaternary structure, part of the ribosomal stalk of the 50S ribosomal subunit. Interacts with L10 and the large rRNA to form the base of the stalk. L10 forms an elongated spine to which L12 dimers bind in a sequential fashion forming a multimeric L10(L12)X complex. One or more lysine residues are methylated.

Functionally, forms part of the ribosomal stalk which helps the ribosome interact with GTP-bound translation factors. This Colwellia psychrerythraea (strain 34H / ATCC BAA-681) (Vibrio psychroerythus) protein is Large ribosomal subunit protein uL11.